Reading from the N-terminus, the 481-residue chain is Aspartyl/glutamyl-tRNA(Asn/Gln) amidotransferase subunit B (481 aa).

This sequence belongs to the GatB/GatE family. GatB subfamily. As to quaternary structure, heterotrimer of A, B and C subunits.

It carries out the reaction L-glutamyl-tRNA(Gln) + L-glutamine + ATP + H2O = L-glutaminyl-tRNA(Gln) + L-glutamate + ADP + phosphate + H(+). It catalyses the reaction L-aspartyl-tRNA(Asn) + L-glutamine + ATP + H2O = L-asparaginyl-tRNA(Asn) + L-glutamate + ADP + phosphate + 2 H(+). Functionally, allows the formation of correctly charged Asn-tRNA(Asn) or Gln-tRNA(Gln) through the transamidation of misacylated Asp-tRNA(Asn) or Glu-tRNA(Gln) in organisms which lack either or both of asparaginyl-tRNA or glutaminyl-tRNA synthetases. The reaction takes place in the presence of glutamine and ATP through an activated phospho-Asp-tRNA(Asn) or phospho-Glu-tRNA(Gln). In Prosthecochloris aestuarii (strain DSM 271 / SK 413), this protein is Aspartyl/glutamyl-tRNA(Asn/Gln) amidotransferase subunit B.